The primary structure comprises 537 residues: Carbamoyl phosphate synthase large chain, C-terminal section (537 aa).

The carbamoyl phosphate synthetic domain stretch occupies residues 1–395; the sequence is MSKKVVILGS…AYYKAQLSAG (395 aa). Positions 122-313 constitute an ATP-grasp domain; it reads RELIIELGLK…LAKIATKVAI (192 aa). ATP contacts are provided by arginine 158, lysine 197, leucine 199, glutamate 204, glycine 229, valine 230, histidine 231, serine 232, glutamine 272, and glutamate 284. Positions 272, 284, and 286 each coordinate Mg(2+). Residues glutamine 272, glutamate 284, and asparagine 286 each coordinate Mn(2+). The region spanning 396 to 537 is the MGS-like domain; that stretch reads YRLPEKGNLF…VHSLQEIYNI (142 aa). Residues 396–537 are allosteric domain; the sequence is YRLPEKGNLF…VHSLQEIYNI (142 aa).

The protein belongs to the CarB family. As to quaternary structure, composed of two chains; the small (or glutamine) chain promotes the hydrolysis of glutamine to ammonia, which is used by the large (or ammonia) chain to synthesize carbamoyl phosphate. Tetramer of heterodimers (alpha,beta)4. Mg(2+) serves as cofactor. Mn(2+) is required as a cofactor.

It carries out the reaction hydrogencarbonate + L-glutamine + 2 ATP + H2O = carbamoyl phosphate + L-glutamate + 2 ADP + phosphate + 2 H(+). The enzyme catalyses hydrogencarbonate + NH4(+) + 2 ATP = carbamoyl phosphate + 2 ADP + phosphate + 2 H(+). It functions in the pathway amino-acid biosynthesis; L-arginine biosynthesis; carbamoyl phosphate from bicarbonate: step 1/1. It participates in pyrimidine metabolism; UMP biosynthesis via de novo pathway; (S)-dihydroorotate from bicarbonate: step 1/3. Functionally, large subunit of the glutamine-dependent carbamoyl phosphate synthetase (CPSase). CPSase catalyzes the formation of carbamoyl phosphate from the ammonia moiety of glutamine, carbonate, and phosphate donated by ATP, constituting the first step of 2 biosynthetic pathways, one leading to arginine and/or urea and the other to pyrimidine nucleotides. The large subunit (synthetase) binds the substrates ammonia (free or transferred from glutamine from the small subunit), hydrogencarbonate and ATP and carries out an ATP-coupled ligase reaction, activating hydrogencarbonate by forming carboxy phosphate which reacts with ammonia to form carbamoyl phosphate. This is Carbamoyl phosphate synthase large chain, C-terminal section (carB2) from Aquifex aeolicus (strain VF5).